Consider the following 167-residue polypeptide: ATP synthase subunit b (167 aa).

The chain crosses the membrane as a helical span at residues 15-37 (FWQTVIFLVTLYLLSKFAWGPIM).

The protein belongs to the ATPase B chain family. F-type ATPases have 2 components, F(1) - the catalytic core - and F(0) - the membrane proton channel. F(1) has five subunits: alpha(3), beta(3), gamma(1), delta(1), epsilon(1). F(0) has three main subunits: a(1), b(2) and c(10-14). The alpha and beta chains form an alternating ring which encloses part of the gamma chain. F(1) is attached to F(0) by a central stalk formed by the gamma and epsilon chains, while a peripheral stalk is formed by the delta and b chains.

The protein resides in the cell inner membrane. F(1)F(0) ATP synthase produces ATP from ADP in the presence of a proton or sodium gradient. F-type ATPases consist of two structural domains, F(1) containing the extramembraneous catalytic core and F(0) containing the membrane proton channel, linked together by a central stalk and a peripheral stalk. During catalysis, ATP synthesis in the catalytic domain of F(1) is coupled via a rotary mechanism of the central stalk subunits to proton translocation. In terms of biological role, component of the F(0) channel, it forms part of the peripheral stalk, linking F(1) to F(0). The protein is ATP synthase subunit b of Cytophaga hutchinsonii (strain ATCC 33406 / DSM 1761 / CIP 103989 / NBRC 15051 / NCIMB 9469 / D465).